The primary structure comprises 411 residues: Putative acid phosphatase 10 (411 aa).

The active-site Nucleophile is H33. The active-site Proton donor is D313. Residues C379 and C385 are joined by a disulfide bond.

It belongs to the histidine acid phosphatase family.

It carries out the reaction a phosphate monoester + H2O = an alcohol + phosphate. This Caenorhabditis elegans protein is Putative acid phosphatase 10 (pho-10).